The following is a 368-amino-acid chain: Cytochrome b (368 aa).

4 consecutive transmembrane segments (helical) span residues 32–52, 76–98, 112–132, and 174–194; these read FGFL…TLAF, WEFR…IHMT, AWMS…LGYV, and FFVL…LHIF. Heme b is bound by residues H82 and H96. Positions 178 and 192 each coordinate heme b. H197 is an a ubiquinone binding site. Transmembrane regions (helical) follow at residues 219 to 239, 285 to 305, 323 to 343, and 347 to 367; these read MLMT…LQAA, GLLV…IRAL, GWVI…SAIP, and YILY…VLCL.

It belongs to the cytochrome b family. As to quaternary structure, the main subunits of complex b-c1 are: cytochrome b, cytochrome c1 and the Rieske protein. It depends on heme b as a cofactor.

Its subcellular location is the mitochondrion inner membrane. Component of the ubiquinol-cytochrome c reductase complex (complex III or cytochrome b-c1 complex) that is part of the mitochondrial respiratory chain. The b-c1 complex mediates electron transfer from ubiquinol to cytochrome c. Contributes to the generation of a proton gradient across the mitochondrial membrane that is then used for ATP synthesis. This Toxoplasma gondii protein is Cytochrome b (MT-CYB).